The primary structure comprises 401 residues: Rab-interacting lysosomal protein (401 aa).

The RH1 domain maps to 11–101 (PGWGSREAAG…REENERLRRE (91 aa)). Residues 75-181 (DSLQVSAQPA…AQDRERERQQ (107 aa)) adopt a coiled-coil conformation. 2 disordered regions span residues 167–239 (TQLR…SEAG) and 304–388 (KMLG…SALH). Over residues 172 to 181 (AQDRERERQQ) the composition is skewed to basic and acidic residues. The 77-residue stretch at 240-316 (QCRFSREEFE…GTPEEAESSE (77 aa)) folds into the RH2 domain. The tract at residues 272–333 (FQRELLTDHR…LLSDDKGDHP (62 aa)) is necessary for interaction with RAB7A and RAB34, lysosomal distribution and morphology. Thr-308 bears the Phosphothreonine mark. The segment covering 310 to 319 (EEAESSEDEA) has biased composition (acidic residues). Residues Ser-314 and Ser-315 each carry the phosphoserine modification.

In terms of assembly, homodimer. Interacts with RAB7A. Interacts with RAB34. Identified in a complex with MREG and DCTN1; interacts directly with MREG. Interacts with CLN3. Interacts with FLCN; the interaction is direct and promotes association between RILP and RAB34. As to expression, ubiquitous. Strongly expressed in fetal heart, heart, stomach, spleen, adrenal gland, thyroid gland, salivary gland, fetal liver, liver and lung. Poorly expressed in brain.

Its subcellular location is the late endosome membrane. It localises to the lysosome membrane. The protein resides in the cytoplasmic vesicle. It is found in the phagosome membrane. Its function is as follows. Rab effector playing a role in late endocytic transport to degradative compartments. Involved in the regulation of lysosomal morphology and distribution. Induces recruitment of dynein-dynactin motor complexes to Rab7A-containing late endosome and lysosome compartments. Promotes centripetal migration of phagosomes and the fusion of phagosomes with the late endosomes and lysosomes. This is Rab-interacting lysosomal protein (RILP) from Homo sapiens (Human).